A 251-amino-acid polypeptide reads, in one-letter code: Flap endonuclease Xni (251 aa).

Aspartate 104 is a binding site for Mg(2+). The 90-residue stretch at 160-249 (VLPRQLPDYW…IDGNLQQLRL (90 aa)) folds into the 5'-3' exonuclease domain. K(+) contacts are provided by leucine 171, alanine 172, proline 180, valine 182, and isoleucine 185. Positions 184–189 (GIGPKS) are interaction with DNA.

It belongs to the Xni family. Mg(2+) serves as cofactor. K(+) is required as a cofactor.

In terms of biological role, has flap endonuclease activity. During DNA replication, flap endonucleases cleave the 5'-overhanging flap structure that is generated by displacement synthesis when DNA polymerase encounters the 5'-end of a downstream Okazaki fragment. The chain is Flap endonuclease Xni from Salmonella newport (strain SL254).